Consider the following 1571-residue polypeptide: Phosphatidylinositol 3-kinase 1 (1571 aa).

Over residues 1-73 the composition is skewed to low complexity; that stretch reads MNSIESSSND…NNDNNNNNNN (73 aa). Disordered stretches follow at residues 1–119, 157–195, and 283–430; these read MNSI…HVNN, GYDV…RTRN, and NSKL…IIKR. Positions 74–85 are enriched in basic and acidic residues; it reads IDKKRKDSKNKQ. Residues 101–119 are compositionally biased toward low complexity; that stretch reads NSNDSNCSSGSSSGGHVNN. Basic and acidic residues predominate over residues 283-292; that stretch reads NSKLDTEEKP. The span at 294–324 shows a compositional bias: low complexity; sequence TTTTTTTTTSTSISTSTPTTTTTTTTNTSTT. Over residues 325–337 the composition is skewed to polar residues; the sequence is NDITIKPKTSPTK. Low complexity-rich tracts occupy residues 360–382 and 405–424; these read KVST…PTGK and NNTN…NNNN. The PI3K-ABD domain maps to 530 to 627; sequence IKTSFNILFL…IPKLKVIEKS (98 aa). Positions 700–789 constitute a PI3K-RBD domain; the sequence is GNKILISIFL…GTKPQLTLIQ (90 aa). The 170-residue stretch at 851 to 1020 folds into the C2 PI3K-type domain; that stretch reads IKKPFRVKVM…GLTLEFEEFN (170 aa). The PIK helical domain maps to 1040-1216; it reads QPPTNINSNE…GILLESYLYA (177 aa). Residues 1280 to 1558 enclose the PI3K/PI4K catalytic domain; the sequence is IINKSKYMDS…LIHESLATKT (279 aa). The G-loop stretch occupies residues 1286 to 1292; the sequence is YMDSKKL. Residues 1424 to 1432 form a catalytic loop region; that stretch reads GIGDRHNDN. The segment at 1443 to 1469 is activation loop; that stretch reads HIDFGHFLGNYKKKFGFKRERAPFVFT.

This sequence belongs to the PI3/PI4-kinase family.

The catalysed reaction is a 1,2-diacyl-sn-glycero-3-phospho-(1D-myo-inositol) + ATP = a 1,2-diacyl-sn-glycero-3-phospho-(1D-myo-inositol-3-phosphate) + ADP + H(+). The chain is Phosphatidylinositol 3-kinase 1 (pikA) from Dictyostelium discoideum (Social amoeba).